Reading from the N-terminus, the 215-residue chain is 7-cyano-7-deazaguanine synthase (215 aa).

Residue 8 to 18 (LSAGLDSTVSL) coordinates ATP. C191, C199, C202, and C205 together coordinate Zn(2+).

This sequence belongs to the QueC family. Homodimer. Zn(2+) is required as a cofactor.

The enzyme catalyses 7-carboxy-7-deazaguanine + NH4(+) + ATP = 7-cyano-7-deazaguanine + ADP + phosphate + H2O + H(+). Its pathway is purine metabolism; 7-cyano-7-deazaguanine biosynthesis. In terms of biological role, catalyzes the ATP-dependent conversion of 7-carboxy-7-deazaguanine (CDG) to 7-cyano-7-deazaguanine (preQ(0)). The chain is 7-cyano-7-deazaguanine synthase from Carboxydothermus hydrogenoformans (strain ATCC BAA-161 / DSM 6008 / Z-2901).